We begin with the raw amino-acid sequence, 97 residues long: Probable lipopolysaccharide assembly protein A (97 aa).

The next 2 helical transmembrane spans lie at 1 to 21 and 46 to 66; these read MIKY…AITI and VAIL…FFYI. Residues 67–95 adopt a coiled-coil conformation; that stretch reads KLKLKNMALARQVKRQTLQINELTTTRDK.

This sequence belongs to the LapA family.

The protein resides in the cell inner membrane. Functionally, involved in the assembly of lipopolysaccharide (LPS). The protein is Probable lipopolysaccharide assembly protein A of Haemophilus influenzae (strain ATCC 51907 / DSM 11121 / KW20 / Rd).